The following is a 338-amino-acid chain: Fructose-1,6-bisphosphatase class 1 1 (338 aa).

Mg(2+)-binding residues include Glu91, Asp113, Leu115, and Asp116. Substrate is bound by residues 116–119, Asn208, and Lys274; that span reads DGSS. Residue Glu280 coordinates Mg(2+).

It belongs to the FBPase class 1 family. Homotetramer. Mg(2+) is required as a cofactor.

The protein resides in the cytoplasm. The enzyme catalyses beta-D-fructose 1,6-bisphosphate + H2O = beta-D-fructose 6-phosphate + phosphate. The protein operates within carbohydrate biosynthesis; gluconeogenesis. The polypeptide is Fructose-1,6-bisphosphatase class 1 1 (Cupriavidus metallidurans (strain ATCC 43123 / DSM 2839 / NBRC 102507 / CH34) (Ralstonia metallidurans)).